A 597-amino-acid chain; its full sequence is Gamma-terpinene synthase, chloroplastic (597 aa).

Residues 1–47 (MATLSMQVSILNKQLKNLNSFGMRASKLPLVARRVDVSTTRLRPICS) constitute a chloroplast transit peptide. Residues Asp350 and Asp354 each contribute to the Mn(2+) site. Residues 350-354 (DDVYD) carry the DDXXD motif motif. Homodimerization regions lie at residues 356 to 362 (YGTLDEL) and 428 to 464 (EAKW…YFTL). 2 residues coordinate Mn(2+): Asp494 and Glu502.

Belongs to the terpene synthase family. In terms of assembly, homodimer. The cofactor is Mn(2+). It depends on Mg(2+) as a cofactor.

The protein localises to the plastid. It is found in the chloroplast. It catalyses the reaction (2E)-geranyl diphosphate = gamma-terpinene + diphosphate. Its pathway is secondary metabolite biosynthesis; terpenoid biosynthesis. In terms of biological role, involved in the biosynthesis of phenolic monoterpenes natural products thymol and carvacrol which have a broad range of biological activities acting as antimicrobial compounds, insecticides, antioxidants and pharmaceutical agents. Monoterpene synthase which catalyzes the conversion of geranyl diphosphate (GPP) to gamma-terpinene and minor amounts of other monoterpenes (e.g. alpha-thujene, alpha-terpinene, myrcene, sabinene, (+)-R-limonene, alpha-pinene and alpha-phellandrene). In Thymus caespititius (Cretan thyme), this protein is Gamma-terpinene synthase, chloroplastic.